The sequence spans 667 residues: Bifunctional polymyxin resistance protein ArnA (667 aa).

Residues 1–304 form a formyltransferase ArnAFT region; sequence MKAIVFAYHD…EMGIVTDVRL (304 aa). His-104 serves as the catalytic Proton donor; for formyltransferase activity. (6R)-10-formyltetrahydrofolate contacts are provided by residues Arg-114 and 136 to 140; that span reads VKKAD. The segment at 314–667 is dehydrogenase ArnADH; it reads RRTRVLILGV…TAAPKDELNA (354 aa). Residues Asp-347 and 368-369 contribute to the NAD(+) site; that span reads DI. Residues Ala-393, Tyr-398, and 432–433 each bind UDP-alpha-D-glucuronate; that span reads TS. Catalysis depends on Glu-434, which acts as the Proton acceptor; for decarboxylase activity. Residues Arg-460, Asn-492, 526 to 535, and Tyr-613 contribute to the UDP-alpha-D-glucuronate site; that span reads KLVDGGAQKR. The active-site Proton donor; for decarboxylase activity is the Arg-619.

The protein in the N-terminal section; belongs to the Fmt family. UDP-L-Ara4N formyltransferase subfamily. In the C-terminal section; belongs to the NAD(P)-dependent epimerase/dehydratase family. UDP-glucuronic acid decarboxylase subfamily. As to quaternary structure, homohexamer, formed by a dimer of trimers.

It catalyses the reaction UDP-alpha-D-glucuronate + NAD(+) = UDP-beta-L-threo-pentopyranos-4-ulose + CO2 + NADH. The catalysed reaction is UDP-4-amino-4-deoxy-beta-L-arabinose + (6R)-10-formyltetrahydrofolate = UDP-4-deoxy-4-formamido-beta-L-arabinose + (6S)-5,6,7,8-tetrahydrofolate + H(+). It participates in nucleotide-sugar biosynthesis; UDP-4-deoxy-4-formamido-beta-L-arabinose biosynthesis; UDP-4-deoxy-4-formamido-beta-L-arabinose from UDP-alpha-D-glucuronate: step 1/3. It functions in the pathway nucleotide-sugar biosynthesis; UDP-4-deoxy-4-formamido-beta-L-arabinose biosynthesis; UDP-4-deoxy-4-formamido-beta-L-arabinose from UDP-alpha-D-glucuronate: step 3/3. Its pathway is bacterial outer membrane biogenesis; lipopolysaccharide biosynthesis. In terms of biological role, bifunctional enzyme that catalyzes the oxidative decarboxylation of UDP-glucuronic acid (UDP-GlcUA) to UDP-4-keto-arabinose (UDP-Ara4O) and the addition of a formyl group to UDP-4-amino-4-deoxy-L-arabinose (UDP-L-Ara4N) to form UDP-L-4-formamido-arabinose (UDP-L-Ara4FN). The modified arabinose is attached to lipid A and is required for resistance to polymyxin and cationic antimicrobial peptides. The polypeptide is Bifunctional polymyxin resistance protein ArnA (Yersinia pseudotuberculosis serotype IB (strain PB1/+)).